Here is a 209-residue protein sequence, read N- to C-terminus: Proteasome subunit beta (209 aa).

The propeptide at 1 to 10 (MVEQSDTMKG) is removed in mature form; by autocatalysis. Thr11 serves as the catalytic Nucleophile.

This sequence belongs to the peptidase T1B family. As to quaternary structure, the 20S proteasome core is composed of 14 alpha and 14 beta subunits that assemble into four stacked heptameric rings, resulting in a barrel-shaped structure. The two inner rings, each composed of seven catalytic beta subunits, are sandwiched by two outer rings, each composed of seven alpha subunits. The catalytic chamber with the active sites is on the inside of the barrel. Has a gated structure, the ends of the cylinder being occluded by the N-termini of the alpha-subunits. Is capped at one or both ends by the proteasome regulatory ATPase, PAN.

Its subcellular location is the cytoplasm. It carries out the reaction Cleavage of peptide bonds with very broad specificity.. Its activity is regulated as follows. The formation of the proteasomal ATPase PAN-20S proteasome complex, via the docking of the C-termini of PAN into the intersubunit pockets in the alpha-rings, triggers opening of the gate for substrate entry. Interconversion between the open-gate and close-gate conformations leads to a dynamic regulation of the 20S proteasome proteolysis activity. Component of the proteasome core, a large protease complex with broad specificity involved in protein degradation. This chain is Proteasome subunit beta, found in Methanospirillum hungatei JF-1 (strain ATCC 27890 / DSM 864 / NBRC 100397 / JF-1).